Here is a 455-residue protein sequence, read N- to C-terminus: Glutamate-1-semialdehyde 2,1-aminomutase (455 aa).

At lysine 286 the chain carries N6-(pyridoxal phosphate)lysine.

The protein belongs to the class-III pyridoxal-phosphate-dependent aminotransferase family. HemL subfamily. In terms of assembly, homodimer. It depends on pyridoxal 5'-phosphate as a cofactor.

The protein resides in the cytoplasm. The catalysed reaction is (S)-4-amino-5-oxopentanoate = 5-aminolevulinate. Its pathway is porphyrin-containing compound metabolism; protoporphyrin-IX biosynthesis; 5-aminolevulinate from L-glutamyl-tRNA(Glu): step 2/2. The polypeptide is Glutamate-1-semialdehyde 2,1-aminomutase (Clavibacter michiganensis subsp. michiganensis (strain NCPPB 382)).